The sequence spans 336 residues: Holliday junction branch migration complex subunit RuvB (336 aa).

Residues 4 to 184 (ADRLISATGV…FGIVQRLEFY (181 aa)) are large ATPase domain (RuvB-L). Residues Ile23, Arg24, Gly65, Lys68, Thr69, Thr70, 131 to 133 (EDY), Arg174, Tyr184, and Arg221 contribute to the ATP site. Thr69 provides a ligand contact to Mg(2+). The small ATPAse domain (RuvB-S) stretch occupies residues 185-255 (NVKDLTDIVS…IAARAMDMLD (71 aa)). Residues 258-336 (NEGFDFMDRK…HFGLQRPDER (79 aa)) are head domain (RuvB-H). Arg313 and Arg318 together coordinate DNA.

Belongs to the RuvB family. Homohexamer. Forms an RuvA(8)-RuvB(12)-Holliday junction (HJ) complex. HJ DNA is sandwiched between 2 RuvA tetramers; dsDNA enters through RuvA and exits via RuvB. An RuvB hexamer assembles on each DNA strand where it exits the tetramer. Each RuvB hexamer is contacted by two RuvA subunits (via domain III) on 2 adjacent RuvB subunits; this complex drives branch migration. In the full resolvosome a probable DNA-RuvA(4)-RuvB(12)-RuvC(2) complex forms which resolves the HJ.

Its subcellular location is the cytoplasm. The enzyme catalyses ATP + H2O = ADP + phosphate + H(+). In terms of biological role, the RuvA-RuvB-RuvC complex processes Holliday junction (HJ) DNA during genetic recombination and DNA repair, while the RuvA-RuvB complex plays an important role in the rescue of blocked DNA replication forks via replication fork reversal (RFR). RuvA specifically binds to HJ cruciform DNA, conferring on it an open structure. The RuvB hexamer acts as an ATP-dependent pump, pulling dsDNA into and through the RuvAB complex. RuvB forms 2 homohexamers on either side of HJ DNA bound by 1 or 2 RuvA tetramers; 4 subunits per hexamer contact DNA at a time. Coordinated motions by a converter formed by DNA-disengaged RuvB subunits stimulates ATP hydrolysis and nucleotide exchange. Immobilization of the converter enables RuvB to convert the ATP-contained energy into a lever motion, pulling 2 nucleotides of DNA out of the RuvA tetramer per ATP hydrolyzed, thus driving DNA branch migration. The RuvB motors rotate together with the DNA substrate, which together with the progressing nucleotide cycle form the mechanistic basis for DNA recombination by continuous HJ branch migration. Branch migration allows RuvC to scan DNA until it finds its consensus sequence, where it cleaves and resolves cruciform DNA. This Aeromonas salmonicida (strain A449) protein is Holliday junction branch migration complex subunit RuvB.